Reading from the N-terminus, the 174-residue chain is MEGWDPNTKSTLTRIPLLTTKAGPRDGAAWTQRLKEEYKSLIAYTQMNKSNDNDWFRISASNPEGTRWTGKCWYVHNLLKYEFDLQFDIPITYPATAPELELPEIDGKTQKMYRGGKICLTVHFKPLWAKNCPRFGIAHALCLGLAPWLAAEIPILVDSGAIKHKDDAATSAES.

The Glycyl thioester intermediate role is filled by cysteine 119.

It belongs to the ubiquitin-conjugating enzyme family. UFC1 subfamily.

E2-like enzyme which forms an intermediate with UFM1 via a thioester linkage. In Arabidopsis thaliana (Mouse-ear cress), this protein is Ubiquitin-fold modifier-conjugating enzyme 1.